The primary structure comprises 731 residues: Radial spoke head 10 homolog B (731 aa).

The tract at residues Met-1–His-69 is disordered. Residues Met-7–Pro-17 are compositionally biased toward polar residues. Composition is skewed to low complexity over residues Thr-18 to Val-36 and Ser-46 to Ser-57. MORN repeat units follow at residues Tyr-86–Val-108, Tyr-109–Lys-131, Tyr-132–Thr-154, Tyr-155–Thr-177, Tyr-179–Thr-201, Tyr-204–Val-226, Tyr-227–Gln-249, Tyr-251–Ala-273, Tyr-284–Leu-306, and Tyr-307–Val-329. Disordered regions lie at residues Thr-353 to Gly-377 and Lys-709 to His-731. Low complexity predominate over residues Ser-363–Gly-377. Polar residues predominate over residues Val-722–His-731.

It is found in the cytoplasm. The protein resides in the cytoskeleton. The protein localises to the cilium axoneme. Its subcellular location is the cell projection. It localises to the cilium. It is found in the flagellum. Functionally, may function as part of axonemal radial spoke complexes. Radial spoke complexes are important for ciliary motility. This chain is Radial spoke head 10 homolog B (rsph10b), found in Danio rerio (Zebrafish).